The sequence spans 280 residues: MSRYTDMFTRLDEAGEGAFVPFIMLNDPSPEDSFQIISTAIEAGADALELGVPFSDPVADGPTVAESHLRALDGGSTVDSCLALIARVREAYPEIPIGMLIYGNVPFTRGLDKFYREFAEAGADSILLPDVPVREGAPFIQAAEGAGIDPIFIAPAQASETTLEGVSAASKGYIYAISRDGVTGTERESSTTGLTDVVDNIKRFGGAPILLGFGISSPKHVADAIAAGAAGAITGSAITKIIASHCEGEHPNPSTITDPEGLRKELTEFISAMKAATKKQ.

Residues glutamate 49 and aspartate 60 each act as proton acceptor in the active site.

The protein belongs to the TrpA family. In terms of assembly, tetramer of two alpha and two beta chains.

It carries out the reaction (1S,2R)-1-C-(indol-3-yl)glycerol 3-phosphate + L-serine = D-glyceraldehyde 3-phosphate + L-tryptophan + H2O. It functions in the pathway amino-acid biosynthesis; L-tryptophan biosynthesis; L-tryptophan from chorismate: step 5/5. Functionally, the alpha subunit is responsible for the aldol cleavage of indoleglycerol phosphate to indole and glyceraldehyde 3-phosphate. This chain is Tryptophan synthase alpha chain, found in Corynebacterium efficiens (strain DSM 44549 / YS-314 / AJ 12310 / JCM 11189 / NBRC 100395).